Consider the following 497-residue polypeptide: Squalene monooxygenase (497 aa).

Residues Val-29–Val-30, Glu-49–Arg-50, Arg-57, Arg-159, Val-175, Asp-336, and Met-349 contribute to the FAD site. 2 helical membrane-spanning segments follow: residues Phe-434 to Leu-454 and Leu-467 to Phe-487.

The protein belongs to the squalene monooxygenase family. Requires FAD as cofactor.

Its subcellular location is the microsome membrane. The protein resides in the endoplasmic reticulum membrane. The enzyme catalyses squalene + reduced [NADPH--hemoprotein reductase] + O2 = (S)-2,3-epoxysqualene + oxidized [NADPH--hemoprotein reductase] + H2O + H(+). It functions in the pathway terpene metabolism; lanosterol biosynthesis; lanosterol from farnesyl diphosphate: step 2/3. In terms of biological role, catalyzes the stereospecific oxidation of squalene to (S)-2,3-epoxysqualene, and is considered to be a rate-limiting enzyme in steroid biosynthesis. In Eremothecium gossypii (strain ATCC 10895 / CBS 109.51 / FGSC 9923 / NRRL Y-1056) (Yeast), this protein is Squalene monooxygenase (ERG1).